The primary structure comprises 154 residues: Ribonuclease H (154 aa).

The region spanning 9-150 (SHPHIIIYTD…ADALANKGVE (142 aa)) is the RNase H type-1 domain. Mg(2+)-binding residues include D18, E56, D78, and D142.

The protein belongs to the RNase H family. In terms of assembly, monomer. The cofactor is Mg(2+).

The protein localises to the cytoplasm. It catalyses the reaction Endonucleolytic cleavage to 5'-phosphomonoester.. In terms of biological role, endonuclease that specifically degrades the RNA of RNA-DNA hybrids. This chain is Ribonuclease H, found in Polynucleobacter asymbioticus (strain DSM 18221 / CIP 109841 / QLW-P1DMWA-1) (Polynucleobacter necessarius subsp. asymbioticus).